A 376-amino-acid polypeptide reads, in one-letter code: Probable inactive protein kinase At3g63330 (376 aa).

One can recognise a Protein kinase domain in the interval 1–370 (MVERGPTVYL…VDEALQHPYF (370 aa)).

The protein belongs to the protein kinase superfamily. Ser/Thr protein kinase family.

The sequence is that of Probable inactive protein kinase At3g63330 from Arabidopsis thaliana (Mouse-ear cress).